Consider the following 645-residue polypeptide: Putative bifunctional exonuclease/endonuclease protein MT2247 (645 aa).

Residues 44-207 (VVVDLETTGG…DDARATVDVL (164 aa)) enclose the Exonuclease domain. The GIY-YIG domain maps to 248-326 (HRPGVYLFRG…LSTHAPPYNR (79 aa)). The segment at 603-645 (WQSDLPTEPHPSREQLFGRTGVDCRTGPPQPLLPGRQPFSTAG) is disordered. The segment covering 635-645 (LPGRQPFSTAG) has biased composition (low complexity).

This Mycobacterium tuberculosis (strain CDC 1551 / Oshkosh) protein is Putative bifunctional exonuclease/endonuclease protein MT2247.